A 378-amino-acid polypeptide reads, in one-letter code: Succinate--CoA ligase [ADP-forming] subunit beta (378 aa).

An ATP-grasp domain is found at R9 to K237. ATP-binding positions include K45, G52–G54, I94, and E99. Mg(2+)-binding residues include N192 and D206. Residues N257 and G314 to T316 each bind substrate.

The protein belongs to the succinate/malate CoA ligase beta subunit family. In terms of assembly, heterotetramer of two alpha and two beta subunits. The cofactor is Mg(2+).

It catalyses the reaction succinate + ATP + CoA = succinyl-CoA + ADP + phosphate. The catalysed reaction is GTP + succinate + CoA = succinyl-CoA + GDP + phosphate. It participates in carbohydrate metabolism; tricarboxylic acid cycle; succinate from succinyl-CoA (ligase route): step 1/1. Functionally, succinyl-CoA synthetase functions in the citric acid cycle (TCA), coupling the hydrolysis of succinyl-CoA to the synthesis of either ATP or GTP and thus represents the only step of substrate-level phosphorylation in the TCA. The beta subunit provides nucleotide specificity of the enzyme and binds the substrate succinate, while the binding sites for coenzyme A and phosphate are found in the alpha subunit. This chain is Succinate--CoA ligase [ADP-forming] subunit beta, found in Herpetosiphon aurantiacus (strain ATCC 23779 / DSM 785 / 114-95).